Reading from the N-terminus, the 178-residue chain is MSRIGNKTITLPADVTVSQEGAVVTVKGPKGELSREIVSAITMTVEGNEVSFSRDSDDSKTRALHGTTRANVANMVEGVSEGFTKTLKLVGVGYRAAKSGSKLTLSVGYSHPVDFEDREELSVEVPDALTIKVSGISKQKVGDLAAEIRAVRSPEPYKGKGIRYEGEVVRRKEGKTGK.

This sequence belongs to the universal ribosomal protein uL6 family. In terms of assembly, part of the 50S ribosomal subunit.

Functionally, this protein binds to the 23S rRNA, and is important in its secondary structure. It is located near the subunit interface in the base of the L7/L12 stalk, and near the tRNA binding site of the peptidyltransferase center. The polypeptide is Large ribosomal subunit protein uL6 (Leuconostoc mesenteroides subsp. mesenteroides (strain ATCC 8293 / DSM 20343 / BCRC 11652 / CCM 1803 / JCM 6124 / NCDO 523 / NBRC 100496 / NCIMB 8023 / NCTC 12954 / NRRL B-1118 / 37Y)).